Here is a 362-residue protein sequence, read N- to C-terminus: Caveolae-associated protein 4 (362 aa).

The segment at Met1–Asp24 is disordered. Residues Ile100–Lys120 adopt a coiled-coil conformation. Phosphoserine is present on residues Ser152, Ser171, and Ser172. 3 stretches are compositionally biased toward basic and acidic residues: residues Arg230–Lys255, Lys275–Gly289, and His305–Thr320. Disordered regions lie at residues Arg230 to Gly289 and His305 to Val346. Position 324 is a phosphotyrosine (Tyr324). Thr334 bears the Phosphothreonine mark. Position 353 is a phosphoserine (Ser353).

It belongs to the CAVIN family. Component of the CAVIN complex composed of CAVIN1, CAVIN2, CAVIN3 and CAVIN4. Interacts with CAVIN1. Interacts with CAVIN2; this augments the transactivation of NPPA. Interacts with CAV3, ADRA1A, ADRA1B, MAPK1 and MAPK3. In terms of tissue distribution, abundantly expressed in cardiac and skeletal muscle (at protein level). Weaker expression in aorta and lung. In heart, expressed in cardiomyocytes and vascular smooth muscle cells but not in other surrounding cells including vascular endothelial cells.

It is found in the cytoplasm. The protein localises to the myofibril. It localises to the sarcomere. Its subcellular location is the cytosol. The protein resides in the membrane. It is found in the caveola. The protein localises to the cell membrane. It localises to the sarcolemma. Functionally, modulates the morphology of formed caveolae in cardiomyocytes, but is not required for caveolar formation. Facilitates the recruitment of MAPK1/3 to caveolae within cardiomyocytes and regulates alpha-1 adrenergic receptor-induced hypertrophic responses in cardiomyocytes through MAPK1/3 activation. Contributes to proper membrane localization and stabilization of caveolin-3 (CAV3) in cardiomyocytes. Induces RHOA activation and activates NPPA transcription and myofibrillar organization through the Rho/ROCK signaling pathway. The chain is Caveolae-associated protein 4 (Cavin4) from Mus musculus (Mouse).